A 329-amino-acid polypeptide reads, in one-letter code: Chloroplast envelope quinone oxidoreductase homolog (329 aa).

Arginine 58 is a substrate binding site.

It belongs to the zinc-containing alcohol dehydrogenase family. Quinone oxidoreductase subfamily. In terms of assembly, homodimer or homotetramer. Transition to monomer upon NADPH binding. Interacts with calmodulin. Interacts with HP30-1, HP30-2 and HP20.

Its subcellular location is the plastid. It localises to the chloroplast inner membrane. NADPH-dependent alpha,beta-unsaturated oxoene reductase reducing the double bond of medium-chain (C9) to long-chain (C18) reactive electrophile species deriving from poly-unsaturated fatty acid peroxides. The best substrates are 13-lipoxygenase-derived gamma-ketols, but is unable to reduce the double bond of short-chain alkenals and alkenones such as acrolein, crotonaldehyde, 3-buten-2-one, 4-hexen-3-one and trans-2-hexenal, or quinones such as duroquinone, decylubiquinone, coenzyme Q0, menadione, menaquinone and phylloquinone. Can use trans-2-nonenal, trans-3-decen-2-one, 4-hydroxynonenal, 12-oxo-10(E) dodecanoate (traumatin), 4-oxononenal, trans-1,3 diphenyl-2-propenone, trans-1,4-diphenyl-2-butene-1,4-dione, 9-oxo-12,13-epoxy-(10E)-octadecenoic acid (trans-EKODE-1b), 9-hydroxy-12-oxo-10(E)-octadecenoic acid, 9-Hydroxy-12-oxo-10(E),15(Z)-octadecadienoic acid and 9,13-dihydroxy-10-oxo-11-octadecenoic acid as substrates, but has no activity with 13(R,S)-hydroperoxy-9(Z),11(E)-octadecadienoic acid (13-HPOD), 9(S),12(S),13(S)-trihydroxy-10(E)-octadecenoic acid, 13-hydroxy-12-oxo-9(Z)-octadecenoic acid, 9-oxo-10(E),12(Z)-octadecadienoic acid (9-KODE), 13-oxo-9(Z),11(E)-octadecadienoic acid (13-KODE) and 12-oxo-10,15(Z)-phytodienoic acid (12-OPDA). The chain is Chloroplast envelope quinone oxidoreductase homolog from Arabidopsis thaliana (Mouse-ear cress).